The primary structure comprises 433 residues: Adenylyltransferase and sulfurtransferase UBA4 (433 aa).

Residues glycine 70, aspartate 91, 98-102 (SNLHR), lysine 115, and 159-160 (DT) each bind ATP. 2 residues coordinate Zn(2+): cysteine 201 and cysteine 204. Cysteine 218 (glycyl thioester intermediate; for adenylyltransferase activity) is an active-site residue. Residues cysteine 279 and cysteine 282 each contribute to the Zn(2+) site. The 100-residue stretch at 332 to 431 (SGNNKVLLDV…YIDDVDQSIP (100 aa)) folds into the Rhodanese domain. Cysteine 390 acts as the Cysteine persulfide intermediate; for sulfurtransferase activity in catalysis.

It in the N-terminal section; belongs to the HesA/MoeB/ThiF family. UBA4 subfamily. Zn(2+) serves as cofactor.

It is found in the cytoplasm. The protein resides in the cytosol. The protein operates within tRNA modification; 5-methoxycarbonylmethyl-2-thiouridine-tRNA biosynthesis. Its function is as follows. Plays a central role in 2-thiolation of mcm(5)S(2)U at tRNA wobble positions of cytosolic tRNA(Lys), tRNA(Glu) and tRNA(Gln). Acts by mediating the C-terminal thiocarboxylation of sulfur carrier URM1. Its N-terminus first activates URM1 as acyl-adenylate (-COAMP), then the persulfide sulfur on the catalytic cysteine is transferred to URM1 to form thiocarboxylation (-COSH) of its C-terminus. The reaction probably involves hydrogen sulfide that is generated from the persulfide intermediate and that acts as a nucleophile towards URM1. Subsequently, a transient disulfide bond is formed. Does not use thiosulfate as sulfur donor; NFS1 probably acting as a sulfur donor for thiocarboxylation reactions. Prior mcm(5) tRNA modification by the elongator complex is required for 2-thiolation. May also be involved in protein urmylation. This is Adenylyltransferase and sulfurtransferase UBA4 from Candida glabrata (strain ATCC 2001 / BCRC 20586 / JCM 3761 / NBRC 0622 / NRRL Y-65 / CBS 138) (Yeast).